We begin with the raw amino-acid sequence, 128 residues long: Sirohydrochlorin cobaltochelatase (128 aa).

The Proton acceptor role is filled by histidine 9. Residue histidine 9 coordinates Co(2+). Substrate-binding positions include lysine 43 and 68-73 (FATGTH). Histidine 73 is a Co(2+) binding site.

The protein belongs to the CbiX family. CbiXS subfamily. Homotetramer; dimer of dimers.

It carries out the reaction Co-sirohydrochlorin + 2 H(+) = sirohydrochlorin + Co(2+). It functions in the pathway cofactor biosynthesis; adenosylcobalamin biosynthesis; cob(II)yrinate a,c-diamide from sirohydrochlorin (anaerobic route): step 1/10. Its function is as follows. Catalyzes the insertion of Co(2+) into sirohydrochlorin as part of the anaerobic pathway to cobalamin biosynthesis. The protein is Sirohydrochlorin cobaltochelatase of Saccharolobus islandicus (strain Y.G.57.14 / Yellowstone #1) (Sulfolobus islandicus).